The primary structure comprises 431 residues: Homeobox protein knotted-1-like 3 (431 aa).

Residues 15–47 form a disordered region; that stretch reads NHFTDQHQPPPPQPPPPPPQQQQHFQEAPPPNW. Positions 22 to 34 are enriched in pro residues; sequence QPPPPQPPPPPPQ. One can recognise an ELK domain in the interval 322–342; it reads ELKHELKQGYKEKIVDIREEI. Residues 343–406 constitute a DNA-binding region (homeobox; TALE-type); sequence LRKRRAGKLP…NQRKRNWHSN (64 aa). A disordered region spans residues 402–431; that stretch reads NWHSNPSSSTVLKNKRKSNAGDNSGRERFA. Positions 404–413 are enriched in polar residues; the sequence is HSNPSSSTVL.

Belongs to the TALE/KNOX homeobox family. In terms of assembly, may form heterodimeric complex with the TALE/BELL proteins. Interacts with OFP1, OFP2, OFP4, OFP12 and OFP14. Interacts with KNATM-B.

Its subcellular location is the nucleus. In Arabidopsis thaliana (Mouse-ear cress), this protein is Homeobox protein knotted-1-like 3 (KNAT3).